We begin with the raw amino-acid sequence, 526 residues long: DNA polymerase epsilon subunit B (526 aa).

The protein belongs to the DNA polymerase epsilon subunit B family. As to quaternary structure, subunit of the DNA polymerase II. Interacts with POL2A (via C-terminus).

Its subcellular location is the nucleus. Its function is as follows. As accessory component of DNA polymerase II participates in chromosomal DNA replication. Required for the timing and determination of cell fate during plant embryogenesis and root pole development, by promoting cell cycle and cell type patterning. Necessary for proper shoot (SAM) and root apical meristem (RAM) functions. Is essential to promote the first divisions of the zygote. This Arabidopsis thaliana (Mouse-ear cress) protein is DNA polymerase epsilon subunit B.